We begin with the raw amino-acid sequence, 206 residues long: Probable N-acetyltransferase 14 (206 aa).

The 152-residue stretch at 55-206 (LRFVLASFAL…TLVREFSKDL (152 aa)) folds into the N-acetyltransferase domain. A helical membrane pass occupies residues 57 to 77 (FVLASFALALLLPVFLAVTAV).

The protein belongs to the camello family.

The protein resides in the membrane. Probable acetyltransferase. Functionally, may act as a transcription factor regulating the expression of coproporphyrinogen oxidase by binding to a promoter regulatory element. The protein is Probable N-acetyltransferase 14 (NAT14) of Macaca fascicularis (Crab-eating macaque).